A 69-amino-acid polypeptide reads, in one-letter code: Protein SlyX homolog (69 aa).

It belongs to the SlyX family.

In Pseudomonas aeruginosa (strain LESB58), this protein is Protein SlyX homolog.